Here is a 225-residue protein sequence, read N- to C-terminus: Transmembrane protein 40 (225 aa).

Methionine 1 bears the N-acetylmethionine mark. The segment covering 1–14 has biased composition (low complexity); that stretch reads MEASGSSSQSQDSG. The disordered stretch occupies residues 1-96; the sequence is MEASGSSSQS…RRDSLRGADH (96 aa). The span at 15 to 29 shows a compositional bias: basic and acidic residues; that stretch reads GVHRETEDHYQETEL. The segment covering 30 to 39 has biased composition (basic residues); the sequence is HKHHGKARER. Low complexity predominate over residues 46–68; the sequence is SSSSSSSSSSSSSSSSSSSSSSD. The segment covering 78 to 87 has biased composition (basic residues); the sequence is GPRKHRRRPR. Serine 129 is modified (phosphoserine). A run of 2 helical transmembrane segments spans residues 152-172 and 179-199; these read FFHFVLLCFAIGALLVCYHYY and LGVGLLTFASLETIGIYFGLV.

The protein resides in the membrane. In Mus musculus (Mouse), this protein is Transmembrane protein 40 (Tmem40).